We begin with the raw amino-acid sequence, 497 residues long: Probable malate:quinone oxidoreductase (497 aa).

It belongs to the MQO family. It depends on FAD as a cofactor.

The catalysed reaction is (S)-malate + a quinone = a quinol + oxaloacetate. The protein operates within carbohydrate metabolism; tricarboxylic acid cycle; oxaloacetate from (S)-malate (quinone route): step 1/1. The sequence is that of Probable malate:quinone oxidoreductase from Flavobacterium johnsoniae (strain ATCC 17061 / DSM 2064 / JCM 8514 / BCRC 14874 / CCUG 350202 / NBRC 14942 / NCIMB 11054 / UW101) (Cytophaga johnsonae).